A 68-amino-acid polypeptide reads, in one-letter code: Large ribosomal subunit protein uL30 (68 aa).

The protein belongs to the universal ribosomal protein uL30 family. In terms of assembly, part of the 50S ribosomal subunit.

In Agrobacterium fabrum (strain C58 / ATCC 33970) (Agrobacterium tumefaciens (strain C58)), this protein is Large ribosomal subunit protein uL30.